Here is a 546-residue protein sequence, read N- to C-terminus: Choline oxidase (546 aa).

FAD-binding positions include 23–24 (SA), glutamate 44, tryptophan 71, 90–92 (AKV), 96–103 (CSSHNSCI), alanine 232, and tyrosine 465. The residue at position 99 (histidine 99) is a Tele-8alpha-FAD histidine. The Proton acceptor role is filled by histidine 466. FAD-binding positions include alanine 500 and 510-512 (NPN).

It belongs to the GMC oxidoreductase family. In terms of assembly, homodimer. Requires FAD as cofactor.

It catalyses the reaction choline + 2 O2 + H2O = glycine betaine + 2 H2O2 + H(+). Its pathway is amine and polyamine biosynthesis; betaine biosynthesis via choline pathway; betaine from choline: step 1/1. In terms of biological role, catalyzes the two-step oxidative conversion of choline to glycine-betaine with betaine aldehyde as an intermediate. Glycine-betaine accumulates to high levels in the cytoplasm of cells to prevent dehydration and plasmolysis in adverse hyperosmotic environments. Accepts either choline or the reaction intermediate betaine-aldehyde as substrate. The chain is Choline oxidase (codA) from Arthrobacter globiformis.